The primary structure comprises 207 residues: MSKGILGKKVGMTQIFTENGELIPVTVIEATPNTVLQVKSVETDGYEATQVGFDTLREVLTNKPAKGHAAKANTTPKRFVREFKGLEGAEVGAEITVDTFAAGDVVDVTGTSKGKGFQGPIKRHGQSRGPMAHGSRYHRRPGSMGPVAANKVPKGKKLAGRMGNKRVTVQNLVIAQVLPEKNVILVKGNVPGAKKSLIVVKSAIKAK.

The segment at Lys113–Ala148 is disordered.

It belongs to the universal ribosomal protein uL3 family. Part of the 50S ribosomal subunit. Forms a cluster with proteins L14 and L19.

Its function is as follows. One of the primary rRNA binding proteins, it binds directly near the 3'-end of the 23S rRNA, where it nucleates assembly of the 50S subunit. The polypeptide is Large ribosomal subunit protein uL3 (Lactococcus lactis subsp. lactis (strain IL1403) (Streptococcus lactis)).